A 136-amino-acid chain; its full sequence is MSTLPPLYATLNVALGGAIGAVLRYQMGRWMTGWLGAPAMSVFPWATLAINALGSLLMGVLAGVLFKLSPGVQDQWRLLIGTGILGGFTTFSAFSLEVWVMVERGQPAFAALYVVLSVSLAISALVFGLMLTRLFA.

The next 4 helical transmembrane spans lie at 3–23 (TLPP…GAVL), 46–66 (ATLA…GVLF), 78–98 (LLIG…SLEV), and 109–129 (FAAL…VFGL). 2 residues coordinate Na(+): Gly86 and Thr89.

This sequence belongs to the fluoride channel Fluc/FEX (TC 1.A.43) family.

The protein resides in the cell inner membrane. The catalysed reaction is fluoride(in) = fluoride(out). Its activity is regulated as follows. Na(+) is not transported, but it plays an essential structural role and its presence is essential for fluoride channel function. Its function is as follows. Fluoride-specific ion channel. Important for reducing fluoride concentration in the cell, thus reducing its toxicity. This is Fluoride-specific ion channel FluC from Erythrobacter litoralis (strain HTCC2594).